Consider the following 351-residue polypeptide: Protein-glutamate methylesterase/protein-glutamine glutaminase 2 (351 aa).

In terms of domain architecture, Response regulatory spans 4–121 (KVLVVDDSAL…PQDFNEYQDL (118 aa)). The residue at position 55 (D55) is a 4-aspartylphosphate. The 193-residue stretch at 156–348 (RVINTQLVAI…DKMLNYLASL (193 aa)) folds into the CheB-type methylesterase domain. Active-site residues include S168, H194, and D290.

It belongs to the CheB family. Post-translationally, phosphorylated by CheA. Phosphorylation of the N-terminal regulatory domain activates the methylesterase activity.

It localises to the cytoplasm. The enzyme catalyses [protein]-L-glutamate 5-O-methyl ester + H2O = L-glutamyl-[protein] + methanol + H(+). It catalyses the reaction L-glutaminyl-[protein] + H2O = L-glutamyl-[protein] + NH4(+). In terms of biological role, involved in chemotaxis. Part of a chemotaxis signal transduction system that modulates chemotaxis in response to various stimuli. Catalyzes the demethylation of specific methylglutamate residues introduced into the chemoreceptors (methyl-accepting chemotaxis proteins or MCP) by CheR. Also mediates the irreversible deamidation of specific glutamine residues to glutamic acid. This chain is Protein-glutamate methylesterase/protein-glutamine glutaminase 2, found in Shewanella sp. (strain MR-4).